The following is a 444-amino-acid chain: ATPase PAAT (444 aa).

4 positions are modified to phosphoserine: serine 177, serine 182, serine 254, and serine 302. The segment at 424–444 (PSPGMPLRHYDSRERLSNGER) is disordered. A compositionally biased stretch (basic and acidic residues) spans 431-444 (RHYDSRERLSNGER).

In terms of assembly, homodimer. Interacts with ABCB7, ABCB8/MITOSUR and ABCB10.

The protein resides in the cytoplasm. It is found in the mitochondrion. The enzyme catalyses ATP + H2O = ADP + phosphate + H(+). In terms of biological role, ATPase that regulates mitochondrial ABC transporters ABCB7, ABCB8/MITOSUR and ABCB10. Regulates mitochondrial ferric concentration and heme biosynthesis and plays a role in the maintenance of mitochondrial homeostasis and cell survival. This is ATPase PAAT from Rattus norvegicus (Rat).